A 292-amino-acid chain; its full sequence is MAISAQQVKELRERSGAGMMECKTVLTEAEGDMEAAIDLLRARGLAKADKKASRVAAEGVIVTALSEDQKRGVVLEVNCETDFVAKNEDFLALAKDCAGQALAQGLKDAEALLADAGVEERRKGLVSKLGENISLRRLQHLQVMDGVIGAYVHGSRIGVLVALEGQAATSELGRDVAMHVAAARPEVIHPGEVSPERLNREKEILITQAADSGKPADIIEKMISGRLNKLLNEIALTGQPFVKDPDRSVGQLIQSFPGVEVLEFVRFEVGEGIEKAPTADFATEVMAQVRGS.

Residues 81 to 84 (TDFV) are involved in Mg(2+) ion dislocation from EF-Tu.

This sequence belongs to the EF-Ts family.

It localises to the cytoplasm. Associates with the EF-Tu.GDP complex and induces the exchange of GDP to GTP. It remains bound to the aminoacyl-tRNA.EF-Tu.GTP complex up to the GTP hydrolysis stage on the ribosome. This is Elongation factor Ts from Acidithiobacillus ferrooxidans (strain ATCC 23270 / DSM 14882 / CIP 104768 / NCIMB 8455) (Ferrobacillus ferrooxidans (strain ATCC 23270)).